The sequence spans 79 residues: Acyl carrier protein (79 aa).

In terms of domain architecture, Carrier spans Ser-2–Ala-77. The residue at position 37 (Ser-37) is an O-(pantetheine 4'-phosphoryl)serine.

Belongs to the acyl carrier protein (ACP) family. In terms of processing, 4'-phosphopantetheine is transferred from CoA to a specific serine of apo-ACP by AcpS. This modification is essential for activity because fatty acids are bound in thioester linkage to the sulfhydryl of the prosthetic group.

It is found in the cytoplasm. Its pathway is lipid metabolism; fatty acid biosynthesis. Functionally, carrier of the growing fatty acid chain in fatty acid biosynthesis. The protein is Acyl carrier protein of Nitrobacter winogradskyi (strain ATCC 25391 / DSM 10237 / CIP 104748 / NCIMB 11846 / Nb-255).